A 173-amino-acid polypeptide reads, in one-letter code: Large ribosomal subunit protein uL10 (173 aa).

It belongs to the universal ribosomal protein uL10 family. Part of the ribosomal stalk of the 50S ribosomal subunit. The N-terminus interacts with L11 and the large rRNA to form the base of the stalk. The C-terminus forms an elongated spine to which L12 dimers bind in a sequential fashion forming a multimeric L10(L12)X complex.

Functionally, forms part of the ribosomal stalk, playing a central role in the interaction of the ribosome with GTP-bound translation factors. The chain is Large ribosomal subunit protein uL10 from Micrococcus luteus (strain ATCC 4698 / DSM 20030 / JCM 1464 / CCM 169 / CCUG 5858 / IAM 1056 / NBRC 3333 / NCIMB 9278 / NCTC 2665 / VKM Ac-2230) (Micrococcus lysodeikticus).